The following is a 227-amino-acid chain: Fibrillarin-like rRNA/tRNA 2'-O-methyltransferase (227 aa).

S-adenosyl-L-methionine-binding positions include 82 to 83 (TT), 100 to 101 (EF), 125 to 126 (DA), and 145 to 148 (DVAQ).

It belongs to the methyltransferase superfamily. Fibrillarin family. As to quaternary structure, interacts with nop5. Component of box C/D small ribonucleoprotein (sRNP) particles that contain rpl7ae, FlpA and nop5, plus a guide RNA.

Involved in pre-rRNA and tRNA processing. Utilizes the methyl donor S-adenosyl-L-methionine to catalyze the site-specific 2'-hydroxyl methylation of ribose moieties in rRNA and tRNA. Site specificity is provided by a guide RNA that base pairs with the substrate. Methylation occurs at a characteristic distance from the sequence involved in base pairing with the guide RNA. The protein is Fibrillarin-like rRNA/tRNA 2'-O-methyltransferase of Methanosarcina acetivorans (strain ATCC 35395 / DSM 2834 / JCM 12185 / C2A).